A 700-amino-acid chain; its full sequence is Polyribonucleotide nucleotidyltransferase (700 aa).

Positions 491 and 497 each coordinate Mg(2+). A KH domain is found at 558–617 (PNYAVIEINPDKIRDVIGKGGATIRQLTEETGAVIDIDDAGTIRIFGENKAATKAAIAKI). In terms of domain architecture, S1 motif spans 627–695 (GKTYEGTVAR…NRGRIKLTMK (69 aa)).

Belongs to the polyribonucleotide nucleotidyltransferase family. Component of the RNA degradosome, which is a multiprotein complex involved in RNA processing and mRNA degradation. It depends on Mg(2+) as a cofactor.

Its subcellular location is the cytoplasm. The enzyme catalyses RNA(n+1) + phosphate = RNA(n) + a ribonucleoside 5'-diphosphate. Involved in mRNA degradation. Catalyzes the phosphorolysis of single-stranded polyribonucleotides processively in the 3'- to 5'-direction. This chain is Polyribonucleotide nucleotidyltransferase, found in Psychrobacter arcticus (strain DSM 17307 / VKM B-2377 / 273-4).